A 305-amino-acid chain; its full sequence is Heat stress transcription factor B-4d (305 aa).

Residues 201–230 (LRRRNSLLLSELAHMRKLYNDIIYFLQNHV) form a hydrophobic repeat HR-A/B region. The Nuclear localization signal motif lies at 286 to 289 (KKRR). A disordered region spans residues 286 to 305 (KKRRVQLVQEDEGDEQGSEG). Acidic residues predominate over residues 294-305 (QEDEGDEQGSEG).

This sequence belongs to the HSF family. Class B subfamily. As to quaternary structure, homotrimer. Exhibits temperature-dependent phosphorylation.

It is found in the nucleus. Its function is as follows. Transcriptional regulator that specifically binds DNA of heat shock promoter elements (HSE). The protein is Heat stress transcription factor B-4d (HSFB4D) of Oryza sativa subsp. japonica (Rice).